The following is a 131-amino-acid chain: Protein Turandot M (131 aa).

The N-terminal stretch at methionine 1–alanine 23 is a signal peptide.

Belongs to the Turandot family.

It is found in the secreted. A humoral factor that may play a role in stress tolerance. Requires Mekk1 expression in the fat body to regulate response to septic injury and consequent immune response. The polypeptide is Protein Turandot M (Drosophila melanogaster (Fruit fly)).